A 150-amino-acid polypeptide reads, in one-letter code: Protein ORF35 (150 aa).

In Homo sapiens (Human), this protein is Protein ORF35 (ORF35).